The chain runs to 556 residues: Cell wall integrity and stress response component 3 (556 aa).

An N-terminal signal peptide occupies residues 1-38 (MERVWFAKLTNKGTIKIGYISFILLSLLCQSLIGLVNA). Residues 39–132 (DFNYEGCYSA…SSYMNVYVNA (94 aa)) enclose the WSC domain. Over 39 to 384 (DFNYEGCYSA…QRLSGGAIAG (346 aa)) the chain is Extracellular. N84 carries an N-linked (GlcNAc...) asparagine glycan. Low complexity-rich tracts occupy residues 142–169 (SSSK…SSTT) and 184–257 (TTVS…STTS). 2 disordered regions span residues 142–257 (SSSK…STTS) and 269–312 (TLSS…PSTS). 2 N-linked (GlcNAc...) asparagine glycosylation sites follow: N367 and N370. Residues 385 to 405 (IVIGVVFGVIFIILILLFLIW) traverse the membrane as a helical segment. At 406 to 556 (RRRKSHDQLD…LSSTVSHNRA (151 aa)) the chain is on the cytoplasmic side. Disordered regions lie at residues 425 to 444 (YSFG…SGTT) and 534 to 556 (LQVV…HNRA). Positions 546-556 (ELSSTVSHNRA) are enriched in polar residues.

The protein localises to the membrane. The polypeptide is Cell wall integrity and stress response component 3 (WSC3) (Saccharomyces cerevisiae (strain ATCC 204508 / S288c) (Baker's yeast)).